A 325-amino-acid polypeptide reads, in one-letter code: Melanocortin receptor 5 (325 aa).

The Extracellular portion of the chain corresponds to 1–37; that stretch reads MNSSFHLHFLDLGLNTTDGNLSGLSVQNASSLCEDMG. N-linked (GlcNAc...) asparagine glycans are attached at residues Asn2, Asn15, Asn20, and Asn28. Residues 38-61 form a helical membrane-spanning segment; sequence IAVEVFLALGLISLLENILVIGAI. Residues 62-73 lie on the Cytoplasmic side of the membrane; the sequence is VRNRNLHTPMYF. Residues 74-97 form a helical membrane-spanning segment; that stretch reads FVGSLAVADMLVSLSNSWETITIY. At 98–114 the chain is on the extracellular side; the sequence is LLTNKHLVMADASVRHL. The chain crosses the membrane as a helical span at residues 115-138; the sequence is DNVFDSMICISVVASMCSLLAIAV. Topologically, residues 139–155 are cytoplasmic; it reads DRYVTIFCALRYQRIMT. A helical transmembrane segment spans residues 156-179; it reads GRRSGAIIGGIWAFCASCGTVFIV. Residues 180 to 186 are Extracellular-facing; it reads YYESTYV. Residues 187-211 form a helical membrane-spanning segment; sequence VICLIAMFLTMLLLMASLYTHMFLL. The Cytoplasmic segment spans residues 212-239; the sequence is ARTHIRRIATLPGHSSVRQRTGVKGAIT. The chain crosses the membrane as a helical span at residues 240-265; it reads LAMLLGVFIVCWAPFFLHLILMISCP. At 266-273 the chain is on the extracellular side; that stretch reads HNLYCSCF. A helical transmembrane segment spans residues 274-297; sequence MSHFNMYLILIMCNSVIDPLIYAF. At 298 to 325 the chain is on the cytoplasmic side; the sequence is RSQEMRKTFKEIVCFQSFRTPCRFPSRY. The S-palmitoyl cysteine moiety is linked to residue Cys311.

It belongs to the G-protein coupled receptor 1 family.

It is found in the cell membrane. Functionally, receptor for MSH (alpha, beta and gamma) and ACTH. The activity of this receptor is mediated by G proteins which activate adenylate cyclase. This receptor is a possible mediator of the immunomodulation properties of melanocortins. This chain is Melanocortin receptor 5 (MC5R), found in Bos taurus (Bovine).